Consider the following 502-residue polypeptide: Ribose import ATP-binding protein RbsA (502 aa).

2 ABC transporter domains span residues 3-239 (VTMR…VGRE) and 249-493 (AAPG…TGGA). 35-42 (GENGAGKS) lines the ATP pocket.

The protein belongs to the ABC transporter superfamily. Ribose importer (TC 3.A.1.2.1) family. In terms of assembly, the complex is composed of an ATP-binding protein (RbsA), two transmembrane proteins (RbsC) and a solute-binding protein (RbsB).

It is found in the cell inner membrane. The enzyme catalyses D-ribose(out) + ATP + H2O = D-ribose(in) + ADP + phosphate + H(+). Functionally, part of the ABC transporter complex RbsABC involved in ribose import. Responsible for energy coupling to the transport system. The chain is Ribose import ATP-binding protein RbsA from Chromobacterium violaceum (strain ATCC 12472 / DSM 30191 / JCM 1249 / CCUG 213 / NBRC 12614 / NCIMB 9131 / NCTC 9757 / MK).